The chain runs to 1273 residues: MVSMLPKADAATGVIRKSYAQLPEVVNVPNLIEMQLQSFVWFQEEGLRELIEEISPIKDFVGNRLELEFIGYEFREPRLSEYECTQRDQTYSVPLYVKARLIVKTTGEIKEPFDLFFGDIPLMTALGTFITSGTERVVVSQLLRSPGVYFTISDDPATGRPLCHTNLIPSRGAWLEFETSNRDVISVKIDGRRKIPVSTLLRAIGYSDDLDILNLFEVIDNDPERHYIQSSIDRDPLIKDEISALIDIYSRLRPGDPPNADNARKLINEMFFDPQHYDLGKVGRYKVNRRLELPSREVGENRALTREDIVAIIQRIIMVNNGQDTPDDIDHLGNRRIRTVGELVQNQFRIGLVRLERVARERMSIVNLEMVTPSALVNIRPVVSAVKEFFGGSQLSQFMDQTNPLAEITNKRRLSAMGPGGLSRERAGFDVRDVHYSHYGRICPIETPEGPNIGLIGSLATYSRINRYGFVETPYRKVYSKLKNNDKKLVGLKLKTEISEKGKVLAAAGSTISEDSFKIISKLPECDISVMPFVSAEVKYMPADEEDRYIIAQANTRLDEKGYFLDDRIEARSAERYVVEPPDKIDYMDVSPKQIFSVAASLIPFLEHDDANRALMGANMQRQAVPLLRAEAPMVATGMEREAARYSGQVIFAKHAGVASSVTSEKIIIRTAEGGHDEYLLKKFVRTNQGTCINQHAIINKGQKIAAGQVLADSSATENGELALGQNCVVAFMSWQGFNYEDAIILSERLVREDAFTSIHITKHELEARDTKLGVEEITRDIPNVGEESLRELDEDGIIRIGAEVGPDDILVGKITPKGETELSAEEKLLRAIFGEKAREVKDTSLRMPHGEWGKVINVRIFSRDSGDDLPARVNKWVQVWVAQKRKVSVGDKLAGRHGNKGVISIIAPVEDMPYLPDGTPVDVVLNPIGVPSRMNLGQILETHLGWAGHLLGFRVATPVFDGADDTVIEDALARSWLSAKAGAIDMSPENKRPSADAHKAIEWIKQQGFDGKKIFDEKHPGLAKEVSLKLWLKDMGVDASALSGAELEKKAYDVSSQSRLPSPIVGKSVLRDGRTGETFDQPVTVGNMYILKLIHLVEDKVHARATGPYSLISQQPLGGKAQFGGQRFGEMEVWAMYAYGTAHNLQEMLTIKSDDIAGRAKAYESIVKGEDVLQPGVPESFKVLVKELQSLGLAVEVINEEVKIAPSEKVSSLNEGNLPASDEISAEILPETLYANTEDISEDSMMSVIDADDQDLVVSSNDEEVSENDERS.

Positions 1252-1273 (ADDQDLVVSSNDEEVSENDERS) are disordered.

It belongs to the RNA polymerase beta chain family. The RNAP catalytic core consists of 2 alpha, 1 beta, 1 beta' and 1 omega subunit. When a sigma factor is associated with the core the holoenzyme is formed, which can initiate transcription.

The catalysed reaction is RNA(n) + a ribonucleoside 5'-triphosphate = RNA(n+1) + diphosphate. Functionally, DNA-dependent RNA polymerase catalyzes the transcription of DNA into RNA using the four ribonucleoside triphosphates as substrates. This chain is DNA-directed RNA polymerase subunit beta, found in Dehalococcoides mccartyi (strain ATCC BAA-2100 / JCM 16839 / KCTC 5957 / BAV1).